A 1578-amino-acid chain; its full sequence is E3 ubiquitin-protein ligase HECW2 (1578 aa).

The residue at position 48 (Ser48) is a Phosphoserine. A C2 domain is found at 171-298 (MEGGASGSLH…LERQAGDQML (128 aa)). Disordered stretches follow at residues 341–453 (HTVN…FPTD) and 496–802 (IDDG…PSVR). The segment covering 386-406 (RTSSTLEIDTEDLISTSSRNS) has biased composition (polar residues). Residues 518–532 (ASIHETASLEERLEN) are compositionally biased toward basic and acidic residues. Over residues 559–576 (SADQGSTELCSSQEVDQP) the composition is skewed to polar residues. A compositionally biased stretch (low complexity) spans 577–593 (TSGADAGASDTSGGSRR). Composition is skewed to polar residues over residues 597-614 (ETESLDQGSEPSQVSSET), 643-664 (SSCNESVTTQLSSVETRCSSLE), and 688-708 (PTSSGPAEGSQESVCTPSSLP). Low complexity-rich tracts occupy residues 721–735 (AAEAAALSEQGELGE), 746–755 (AAAAAPAAAA), and 769–782 (AQGACEGATAQEEG). The interval 737 to 1074 (WQRRGSLEGA…PRPSSTFNTV (338 aa)) is interaction with TP73. In terms of domain architecture, WW 1 spans 813–846 (EALPPNWEARIDSHGRIFYVDHVNRTTTWQRPTA). Positions 853-880 (LQRSNSIQQMEQLNRRYQSIRRTMTNER) form a coiled coil. Residues Ser858 and Ser915 each carry the phosphoserine modification. Residues 991-1024 (LELPRGWEMKHDHQGKAFFVDHNSRTTTFIDPRL) form the WW 2 domain. Disordered stretches follow at residues 1030–1075 (RPTS…NTVS) and 1167–1193 (CQSPRGSPVSSPQNSPGTQRANARAPA). The segment covering 1037 to 1046 (HRQHLTRQRS) has biased composition (basic residues). The segment covering 1167–1187 (CQSPRGSPVSSPQNSPGTQRA) has biased composition (polar residues). Phosphoserine is present on Ser1181. The HECT domain occupies 1243–1578 (SRKDLQRNKL…VEETSTFGLE (336 aa)). The active-site Glycyl thioester intermediate is the Cys1546.

As to quaternary structure, interacts with TP73. Interacts with FZR1.

The protein localises to the cytoplasm. The protein resides in the cytoskeleton. Its subcellular location is the spindle. The enzyme catalyses S-ubiquitinyl-[E2 ubiquitin-conjugating enzyme]-L-cysteine + [acceptor protein]-L-lysine = [E2 ubiquitin-conjugating enzyme]-L-cysteine + N(6)-ubiquitinyl-[acceptor protein]-L-lysine.. It participates in protein modification; protein ubiquitination. E3 ubiquitin-protein ligase that mediates ubiquitination of TP73. Acts to stabilize TP73 and enhance activation of transcription by TP73. Involved in the regulation of mitotic metaphase/anaphase transition. In Mus musculus (Mouse), this protein is E3 ubiquitin-protein ligase HECW2 (Hecw2).